Consider the following 331-residue polypeptide: Glycerol-3-phosphate dehydrogenase [NAD(P)+] (331 aa).

Residues serine 10, tryptophan 11, and lysine 101 each contribute to the NADPH site. Sn-glycerol 3-phosphate-binding residues include lysine 101, glycine 132, and serine 134. Position 136 (alanine 136) interacts with NADPH. Sn-glycerol 3-phosphate-binding residues include lysine 188, aspartate 241, serine 251, arginine 252, and asparagine 253. Residue lysine 188 is the Proton acceptor of the active site. Position 252 (arginine 252) interacts with NADPH. The NADPH site is built by valine 276 and glutamate 278.

It belongs to the NAD-dependent glycerol-3-phosphate dehydrogenase family.

The protein resides in the cytoplasm. It catalyses the reaction sn-glycerol 3-phosphate + NAD(+) = dihydroxyacetone phosphate + NADH + H(+). The enzyme catalyses sn-glycerol 3-phosphate + NADP(+) = dihydroxyacetone phosphate + NADPH + H(+). Its pathway is membrane lipid metabolism; glycerophospholipid metabolism. Catalyzes the reduction of the glycolytic intermediate dihydroxyacetone phosphate (DHAP) to sn-glycerol 3-phosphate (G3P), the key precursor for phospholipid synthesis. The chain is Glycerol-3-phosphate dehydrogenase [NAD(P)+] from Acholeplasma laidlawii (strain PG-8A).